A 169-amino-acid polypeptide reads, in one-letter code: Myosin regulatory light chain 11 (169 aa).

Ala2 bears the N,N,N-trimethylalanine mark. Phosphoserine is present on residues Ser15 and Ser16. A phosphothreonine mark is found at Thr25 and Thr35. The region spanning 25–60 is the EF-hand 1 domain; it reads TQIQEFKEAFTVIDQNRDGIIDKEDLRDTFAAMGRL. Positions 38, 40, 42, and 49 each coordinate Ca(2+). The residue at position 75 (Ser75) is a Phosphoserine. EF-hand domains lie at 95-130 and 131-166; these read DPEDVITGAFKVLDPEGKGTIKKKFLEELLTTQCDR and FSQEEIKNMWAAFPPDVGGNVDYKNICYVITHGDAK. Thr101 carries the post-translational modification Phosphothreonine.

As to quaternary structure, myosin is a hexamer of 2 heavy chains and 4 light chains. Expressed in fetal and adult skeletal muscle.

Functionally, myosin regulatory subunit that plays an essential role to maintain muscle integrity during early development. Plays a role in muscle contraction. The chain is Myosin regulatory light chain 11 from Homo sapiens (Human).